Reading from the N-terminus, the 88-residue chain is Apolipoprotein C-I (88 aa).

An N-terminal signal peptide occupies residues 1–26 (MRLFLSLPVLVVVLAMVLEGPAPAQA).

This sequence belongs to the apolipoprotein C1 family.

The protein localises to the secreted. Its function is as follows. Inhibitor of lipoprotein binding to the low density lipoprotein (LDL) receptor, LDL receptor-related protein, and very low density lipoprotein (VLDL) receptor. Associates with high density lipoproteins (HDL) and the triacylglycerol-rich lipoproteins in the plasma and makes up about 10% of the protein of the VLDL and 2% of that of HDL. Appears to interfere directly with fatty acid uptake and is also the major plasma inhibitor of cholesteryl ester transfer protein (CETP). Binds free fatty acids and reduces their intracellular esterification. Modulates the interaction of APOE with beta-migrating VLDL and inhibits binding of beta-VLDL to the LDL receptor-related protein. The protein is Apolipoprotein C-I (APOC1) of Ailurus fulgens (Himalayan red panda).